The following is a 237-amino-acid chain: 7-cyano-7-deazaguanine synthase (237 aa).

An ATP-binding site is contributed by Leu-15–Ala-25. Cys-197, Cys-205, Cys-208, and Cys-211 together coordinate Zn(2+).

The protein belongs to the QueC family. The cofactor is Zn(2+).

It carries out the reaction 7-carboxy-7-deazaguanine + NH4(+) + ATP = 7-cyano-7-deazaguanine + ADP + phosphate + H2O + H(+). The protein operates within purine metabolism; 7-cyano-7-deazaguanine biosynthesis. In terms of biological role, catalyzes the ATP-dependent conversion of 7-carboxy-7-deazaguanine (CDG) to 7-cyano-7-deazaguanine (preQ(0)). In Koribacter versatilis (strain Ellin345), this protein is 7-cyano-7-deazaguanine synthase.